The primary structure comprises 544 residues: Methionine--tRNA ligase (544 aa).

A 'HIGH' region motif is present at residues 10 to 20; that stretch reads PYANGSLHLGH. Zn(2+) is bound by residues C141, C144, C153, and C156. The 'KMSKS' region signature appears at 329 to 333; the sequence is KLSTS. T332 lines the ATP pocket.

It belongs to the class-I aminoacyl-tRNA synthetase family. MetG type 1 subfamily. Monomer. Requires Zn(2+) as cofactor.

The protein localises to the cytoplasm. It catalyses the reaction tRNA(Met) + L-methionine + ATP = L-methionyl-tRNA(Met) + AMP + diphosphate. Functionally, is required not only for elongation of protein synthesis but also for the initiation of all mRNA translation through initiator tRNA(fMet) aminoacylation. The polypeptide is Methionine--tRNA ligase (Bacillus cereus (strain Q1)).